Reading from the N-terminus, the 175-residue chain is NADH-ubiquinone oxidoreductase chain 6 (175 aa).

5 helical membrane-spanning segments follow: residues 1–21 (MMTY…VGFS), 25–45 (SPIY…GIVL), 47–67 (FGGS…MLVV), 88–108 (AVLG…CYIL), and 149–169 (YGTW…LVIM).

The protein belongs to the complex I subunit 6 family. In terms of assembly, core subunit of respiratory chain NADH dehydrogenase (Complex I) which is composed of 45 different subunits.

The protein localises to the mitochondrion inner membrane. It carries out the reaction a ubiquinone + NADH + 5 H(+)(in) = a ubiquinol + NAD(+) + 4 H(+)(out). Functionally, core subunit of the mitochondrial membrane respiratory chain NADH dehydrogenase (Complex I) which catalyzes electron transfer from NADH through the respiratory chain, using ubiquinone as an electron acceptor. Essential for the catalytic activity and assembly of complex I. The chain is NADH-ubiquinone oxidoreductase chain 6 (MT-ND6) from Halichoerus grypus (Gray seal).